The chain runs to 192 residues: FAD-linked sulfhydryl oxidase erv2 (192 aa).

The Cytoplasmic portion of the chain corresponds to 1-8 (MILNRRIQ). A helical; Signal-anchor transmembrane segment spans residues 9-29 (VILPTLLILSFIIWIFHSVMV). Over 30–192 (DKDWRLFMPE…VINEDHDYSG (163 aa)) the chain is Lumenal. The ERV/ALR sulfhydryl oxidase domain maps to 61-162 (HDNNTNNLMV…TSCDGFNERY (102 aa)). FAD-binding residues include W74, C138, H141, N145, and Y162. C138 and C155 are joined by a disulfide.

Requires FAD as cofactor.

Its subcellular location is the endoplasmic reticulum membrane. It is found in the cytoplasm. It localises to the nucleus. The enzyme catalyses 2 R'C(R)SH + O2 = R'C(R)S-S(R)CR' + H2O2. Its function is as follows. FAD-dependent sulfhydryl oxidase that catalyzes disulfide bond formation in the endoplasmic reticulum lumen. The chain is FAD-linked sulfhydryl oxidase erv2 (erv2) from Schizosaccharomyces pombe (strain 972 / ATCC 24843) (Fission yeast).